Reading from the N-terminus, the 523-residue chain is Glycerate kinase (523 aa).

S60 bears the Phosphoserine mark. K200 bears the N6-acetyllysine mark.

It belongs to the glycerate kinase type-2 family.

The protein localises to the cytoplasm. The catalysed reaction is (R)-glycerate + ATP = (2R)-3-phosphoglycerate + ADP + H(+). This Bos taurus (Bovine) protein is Glycerate kinase (GLYCTK).